The following is a 100-amino-acid chain: Large ribosomal subunit protein uL23 (100 aa).

Belongs to the universal ribosomal protein uL23 family. Part of the 50S ribosomal subunit. Contacts protein L29, and trigger factor when it is bound to the ribosome.

One of the early assembly proteins it binds 23S rRNA. One of the proteins that surrounds the polypeptide exit tunnel on the outside of the ribosome. Forms the main docking site for trigger factor binding to the ribosome. The protein is Large ribosomal subunit protein uL23 of Mycolicibacterium vanbaalenii (strain DSM 7251 / JCM 13017 / BCRC 16820 / KCTC 9966 / NRRL B-24157 / PYR-1) (Mycobacterium vanbaalenii).